A 212-amino-acid polypeptide reads, in one-letter code: 3-isopropylmalate dehydratase small subunit 2 (212 aa).

This sequence belongs to the LeuD family. LeuD type 1 subfamily. Heterodimer of LeuC and LeuD.

It carries out the reaction (2R,3S)-3-isopropylmalate = (2S)-2-isopropylmalate. Its pathway is amino-acid biosynthesis; L-leucine biosynthesis; L-leucine from 3-methyl-2-oxobutanoate: step 2/4. Catalyzes the isomerization between 2-isopropylmalate and 3-isopropylmalate, via the formation of 2-isopropylmaleate. The protein is 3-isopropylmalate dehydratase small subunit 2 of Chromobacterium violaceum (strain ATCC 12472 / DSM 30191 / JCM 1249 / CCUG 213 / NBRC 12614 / NCIMB 9131 / NCTC 9757 / MK).